Here is a 228-residue protein sequence, read N- to C-terminus: tRNA (guanine-N(1)-)-methyltransferase (228 aa).

S-adenosyl-L-methionine contacts are provided by residues glycine 108 and 127–132 (VGDFIL).

This sequence belongs to the RNA methyltransferase TrmD family. Homodimer.

Its subcellular location is the cytoplasm. The enzyme catalyses guanosine(37) in tRNA + S-adenosyl-L-methionine = N(1)-methylguanosine(37) in tRNA + S-adenosyl-L-homocysteine + H(+). In terms of biological role, specifically methylates guanosine-37 in various tRNAs. The protein is tRNA (guanine-N(1)-)-methyltransferase of Metamycoplasma arthritidis (strain 158L3-1) (Mycoplasma arthritidis).